A 219-amino-acid chain; its full sequence is 2-hydroxy-3-keto-5-methylthiopentenyl-1-phosphate phosphatase (219 aa).

This sequence belongs to the HAD-like hydrolase superfamily. MtnX family.

It carries out the reaction 2-hydroxy-5-methylsulfanyl-3-oxopent-1-enyl phosphate + H2O = 1,2-dihydroxy-5-(methylsulfanyl)pent-1-en-3-one + phosphate. It participates in amino-acid biosynthesis; L-methionine biosynthesis via salvage pathway; L-methionine from S-methyl-5-thio-alpha-D-ribose 1-phosphate: step 4/6. Functionally, dephosphorylates 2-hydroxy-3-keto-5-methylthiopentenyl-1-phosphate (HK-MTPenyl-1-P) yielding 1,2-dihydroxy-3-keto-5-methylthiopentene (DHK-MTPene). The chain is 2-hydroxy-3-keto-5-methylthiopentenyl-1-phosphate phosphatase from Bacillus cereus (strain AH187).